Reading from the N-terminus, the 475-residue chain is Sensor histidine kinase GlrK (475 aa).

Residues 1-13 are Cytoplasmic-facing; the sequence is MKRWPVFPRSLRQ. The helical transmembrane segment at 14–34 threads the bilayer; the sequence is LVMLAFLLILLPLLVLAWQAW. Residues 35-173 lie on the Periplasmic side of the membrane; that stretch reads QSLNALSDQA…LQREIAERGQ (139 aa). A helical membrane pass occupies residues 174-194; the sequence is YFGWQSLVLFLVSLVMVLLFT. Residues 195–475 lie on the Cytoplasmic side of the membrane; it reads RMIIGPVKNI…IELPSSKNTK (281 aa). Positions 256–472 constitute a Histidine kinase domain; that stretch reads HLSHELKTPL…CFRIELPSSK (217 aa). A Phosphohistidine; by autocatalysis modification is found at H259.

Post-translationally, autophosphorylated.

Its subcellular location is the cell inner membrane. It catalyses the reaction ATP + protein L-histidine = ADP + protein N-phospho-L-histidine.. Member of the two-component regulatory system GlrR/GlrK that up-regulates transcription of the glmY sRNA when cells enter the stationary growth phase. Activates GlrR by phosphorylation. The sequence is that of Sensor histidine kinase GlrK (glrK) from Escherichia coli (strain K12).